The sequence spans 661 residues: Bifunctional xylanase/xylan deacetylase (661 aa).

An N-terminal signal peptide occupies residues Met-1–Ala-27. A GH11 domain is found at Thr-29–Ser-226. The Nucleophile; for endoxylanase activity role is filled by Glu-116. Glu-213 (proton donor; for endoxylanase activity) is an active-site residue. The disordered stretch occupies residues Ser-220–Arg-259. Positions Val-237–Ser-247 are enriched in low complexity. Residues Ser-394–Asp-577 form a polysaccharide deacetylase region. Residues Gly-398–Gly-574 form the NodB homology domain. The interval Pro-578–Asn-610 is disordered. A compositionally biased stretch (low complexity) spans Gly-581 to Gly-608. Residues Gln-616 to Thr-645 form the CBM10 domain.

The protein in the N-terminal section; belongs to the glycosyl hydrolase 11 (cellulase G) family.

It localises to the secreted. It carries out the reaction Endohydrolysis of (1-&gt;4)-beta-D-xylosidic linkages in xylans.. It catalyses the reaction Deacetylation of xylans and xylo-oligosaccharides.. It functions in the pathway glycan degradation; xylan degradation. In terms of biological role, endo-acting xylanase which specifically cleaves internal linkages on the xylan backbone, releasing xylooligosaccharides. Is able to hydrolyze oat spelt xylan and the arabinoxylans from wheat and rye, releasing xylobiose as the major product. Also likely catalyzes, via its C-terminal domain, the removal of acetyl groups from acetylated xylan. Thus, has the capability of hydrolyzing acetylated xylan. Does not attack mannan, galactan, arabinan or any cellulosic substrates. This is Bifunctional xylanase/xylan deacetylase (xyn11A) from Cellvibrio japonicus (Pseudomonas fluorescens subsp. cellulosa).